We begin with the raw amino-acid sequence, 384 residues long: Chaperone protein DnaJ (384 aa).

One can recognise a J domain in the interval 4–68 (DFYDVLGVSR…EKRQMYDQLG (65 aa)). 2 disordered regions span residues 74-105 (QAQK…GMGG) and 113-132 (NNLF…QGRD). A compositionally biased stretch (gly residues) spans 79 to 105 (GAGGGGGGRGQGNPFGGGGNPFGGMGG). Residues 147–229 (GVERDVTIRR…CRGSGRVRRT (83 aa)) form a CR-type zinc finger. Residues C160, C163, C177, C180, C203, C206, C217, and C220 each coordinate Zn(2+). CXXCXGXG motif repeat units lie at residues 160–167 (CPECDGEG), 177–184 (CSECNGSG), 203–210 (CRACGGEG), and 217–224 (CSECRGSG).

This sequence belongs to the DnaJ family. In terms of assembly, homodimer. Zn(2+) serves as cofactor.

The protein localises to the cytoplasm. Participates actively in the response to hyperosmotic and heat shock by preventing the aggregation of stress-denatured proteins and by disaggregating proteins, also in an autonomous, DnaK-independent fashion. Unfolded proteins bind initially to DnaJ; upon interaction with the DnaJ-bound protein, DnaK hydrolyzes its bound ATP, resulting in the formation of a stable complex. GrpE releases ADP from DnaK; ATP binding to DnaK triggers the release of the substrate protein, thus completing the reaction cycle. Several rounds of ATP-dependent interactions between DnaJ, DnaK and GrpE are required for fully efficient folding. Also involved, together with DnaK and GrpE, in the DNA replication of plasmids through activation of initiation proteins. The sequence is that of Chaperone protein DnaJ from Haloferax mediterranei (strain ATCC 33500 / DSM 1411 / JCM 8866 / NBRC 14739 / NCIMB 2177 / R-4) (Halobacterium mediterranei).